The chain runs to 622 residues: 1-deoxy-D-xylulose-5-phosphate synthase (622 aa).

Residues His80 and 121-123 contribute to the thiamine diphosphate site; that span reads GHS. Residue Asp152 coordinates Mg(2+). Thiamine diphosphate-binding positions include 153–154, Asn181, Tyr288, and Glu370; that span reads GA. Residue Asn181 participates in Mg(2+) binding.

Belongs to the transketolase family. DXPS subfamily. Homodimer. Mg(2+) serves as cofactor. The cofactor is thiamine diphosphate.

The catalysed reaction is D-glyceraldehyde 3-phosphate + pyruvate + H(+) = 1-deoxy-D-xylulose 5-phosphate + CO2. Its pathway is metabolic intermediate biosynthesis; 1-deoxy-D-xylulose 5-phosphate biosynthesis; 1-deoxy-D-xylulose 5-phosphate from D-glyceraldehyde 3-phosphate and pyruvate: step 1/1. Catalyzes the acyloin condensation reaction between C atoms 2 and 3 of pyruvate and glyceraldehyde 3-phosphate to yield 1-deoxy-D-xylulose-5-phosphate (DXP). In Hamiltonella defensa subsp. Acyrthosiphon pisum (strain 5AT), this protein is 1-deoxy-D-xylulose-5-phosphate synthase.